The primary structure comprises 77 residues: Phytosulfokines 5 (77 aa).

The N-terminal stretch at 1–24 (MVKFTTFLCIIALLLCSTLTHASA) is a signal peptide. Residues 25-68 (RLNPTSVYPEENSFKKLEQGEVICEGVGEEECFLIRRTLVAHTD) constitute a propeptide that is removed on maturation. A sulfotyrosine mark is found at Tyr69 and Tyr71. A propeptide spanning residues 74–77 (NHNP) is cleaved from the precursor.

This sequence belongs to the phytosulfokine family. Sulfation is important for activity and for the binding to a putative membrane receptor. Post-translationally, PSK-beta is an enzymatic derivative of PSK-alpha. As to expression, expressed in stems, roots, mature leaves and flowers. Most abundant in vascular bundles.

Its subcellular location is the secreted. Promotes plant cell differentiation, organogenesis and somatic embryogenesis as well as cell proliferation. May be involved in the low quiescent center cell proliferation. This Arabidopsis thaliana (Mouse-ear cress) protein is Phytosulfokines 5 (PSK5).